The primary structure comprises 280 residues: Large ribosomal subunit protein uL2 (280 aa).

2 disordered regions span residues 27–58 and 226–280; these read STPEKSLVRPLHGHGGRNAHGRITTRHKGGGH and MNPV…KHGR. 2 stretches are compositionally biased toward basic residues: residues 37 to 58 and 268 to 280; these read LHGHGGRNAHGRITTRHKGGGH and IVRRRRTGKKHGR.

It belongs to the universal ribosomal protein uL2 family. As to quaternary structure, part of the 50S ribosomal subunit. Forms a bridge to the 30S subunit in the 70S ribosome.

One of the primary rRNA binding proteins. Required for association of the 30S and 50S subunits to form the 70S ribosome, for tRNA binding and peptide bond formation. It has been suggested to have peptidyltransferase activity; this is somewhat controversial. Makes several contacts with the 16S rRNA in the 70S ribosome. The chain is Large ribosomal subunit protein uL2 from Mycobacterium marinum (strain ATCC BAA-535 / M).